We begin with the raw amino-acid sequence, 662 residues long: Bifunctional polymyxin resistance protein ArnA (662 aa).

The interval 1-307 (MTSKAVVFAY…ELGLVEGARL (307 aa)) is formyltransferase ArnAFT. His106 serves as the catalytic Proton donor; for formyltransferase activity. (6R)-10-formyltetrahydrofolate is bound by residues Arg116 and 138–142 (IERAD). Residues 316-662 (RRTRVLILGV…EALREREAQA (347 aa)) form a dehydrogenase ArnADH region. NAD(+)-binding positions include Asp349 and 370–371 (DI). Residues Ala395, Tyr400, and 434–435 (TS) contribute to the UDP-alpha-D-glucuronate site. Glu436 (proton acceptor; for decarboxylase activity) is an active-site residue. Residues Arg462, Asn493, 527–536 (RLVDGGAQKR), and Tyr614 contribute to the UDP-alpha-D-glucuronate site. Arg620 (proton donor; for decarboxylase activity) is an active-site residue.

This sequence in the N-terminal section; belongs to the Fmt family. UDP-L-Ara4N formyltransferase subfamily. In the C-terminal section; belongs to the NAD(P)-dependent epimerase/dehydratase family. UDP-glucuronic acid decarboxylase subfamily. In terms of assembly, homohexamer, formed by a dimer of trimers.

The enzyme catalyses UDP-alpha-D-glucuronate + NAD(+) = UDP-beta-L-threo-pentopyranos-4-ulose + CO2 + NADH. It carries out the reaction UDP-4-amino-4-deoxy-beta-L-arabinose + (6R)-10-formyltetrahydrofolate = UDP-4-deoxy-4-formamido-beta-L-arabinose + (6S)-5,6,7,8-tetrahydrofolate + H(+). It participates in nucleotide-sugar biosynthesis; UDP-4-deoxy-4-formamido-beta-L-arabinose biosynthesis; UDP-4-deoxy-4-formamido-beta-L-arabinose from UDP-alpha-D-glucuronate: step 1/3. Its pathway is nucleotide-sugar biosynthesis; UDP-4-deoxy-4-formamido-beta-L-arabinose biosynthesis; UDP-4-deoxy-4-formamido-beta-L-arabinose from UDP-alpha-D-glucuronate: step 3/3. It functions in the pathway bacterial outer membrane biogenesis; lipopolysaccharide biosynthesis. In terms of biological role, bifunctional enzyme that catalyzes the oxidative decarboxylation of UDP-glucuronic acid (UDP-GlcUA) to UDP-4-keto-arabinose (UDP-Ara4O) and the addition of a formyl group to UDP-4-amino-4-deoxy-L-arabinose (UDP-L-Ara4N) to form UDP-L-4-formamido-arabinose (UDP-L-Ara4FN). The modified arabinose is attached to lipid A and is required for resistance to polymyxin and cationic antimicrobial peptides. The protein is Bifunctional polymyxin resistance protein ArnA of Pseudomonas aeruginosa (strain LESB58).